The chain runs to 119 residues: Ribonuclease P protein component (119 aa).

Belongs to the RnpA family. Consists of a catalytic RNA component (M1 or rnpB) and a protein subunit.

It catalyses the reaction Endonucleolytic cleavage of RNA, removing 5'-extranucleotides from tRNA precursor.. Functionally, RNaseP catalyzes the removal of the 5'-leader sequence from pre-tRNA to produce the mature 5'-terminus. It can also cleave other RNA substrates such as 4.5S RNA. The protein component plays an auxiliary but essential role in vivo by binding to the 5'-leader sequence and broadening the substrate specificity of the ribozyme. This Beutenbergia cavernae (strain ATCC BAA-8 / DSM 12333 / CCUG 43141 / JCM 11478 / NBRC 16432 / NCIMB 13614 / HKI 0122) protein is Ribonuclease P protein component.